A 115-amino-acid chain; its full sequence is NADH-ubiquinone oxidoreductase chain 3 (115 aa).

The next 3 helical transmembrane spans lie at 3–23 (LVMA…IAFW), 55–75 (FFLV…LLPL), and 86–106 (TMLI…AYEW).

Belongs to the complex I subunit 3 family. As to quaternary structure, core subunit of respiratory chain NADH dehydrogenase (Complex I) which is composed of 45 different subunits. Interacts with TMEM186. Interacts with TMEM242.

Its subcellular location is the mitochondrion inner membrane. The catalysed reaction is a ubiquinone + NADH + 5 H(+)(in) = a ubiquinol + NAD(+) + 4 H(+)(out). Functionally, core subunit of the mitochondrial membrane respiratory chain NADH dehydrogenase (Complex I) which catalyzes electron transfer from NADH through the respiratory chain, using ubiquinone as an electron acceptor. Essential for the catalytic activity of complex I. This is NADH-ubiquinone oxidoreductase chain 3 from Hippopotamus amphibius (Hippopotamus).